Here is a 226-residue protein sequence, read N- to C-terminus: Enolase-phosphatase E1 (226 aa).

This sequence belongs to the HAD-like hydrolase superfamily. MasA/MtnC family. In terms of assembly, monomer. The cofactor is Mg(2+).

It catalyses the reaction 5-methylsulfanyl-2,3-dioxopentyl phosphate + H2O = 1,2-dihydroxy-5-(methylsulfanyl)pent-1-en-3-one + phosphate. It participates in amino-acid biosynthesis; L-methionine biosynthesis via salvage pathway; L-methionine from S-methyl-5-thio-alpha-D-ribose 1-phosphate: step 3/6. Its pathway is amino-acid biosynthesis; L-methionine biosynthesis via salvage pathway; L-methionine from S-methyl-5-thio-alpha-D-ribose 1-phosphate: step 4/6. Functionally, bifunctional enzyme that catalyzes the enolization of 2,3-diketo-5-methylthiopentyl-1-phosphate (DK-MTP-1-P) into the intermediate 2-hydroxy-3-keto-5-methylthiopentenyl-1-phosphate (HK-MTPenyl-1-P), which is then dephosphorylated to form the acireductone 1,2-dihydroxy-3-keto-5-methylthiopentene (DHK-MTPene). The protein is Enolase-phosphatase E1 of Shewanella sp. (strain MR-4).